Here is a 113-residue protein sequence, read N- to C-terminus: Dolichyl-diphosphooligosaccharide--protein glycosyltransferase subunit dad-1 (113 aa).

Topologically, residues 1 to 32 are cytoplasmic; that stretch reads MAAQVVPVLSKLFDDYQKTTSSKLKIIDAYMT. Residues 33–53 form a helical membrane-spanning segment; sequence YILFTGIFQFIYCLLVGTFPF. Residues 54-55 are Lumenal-facing; sequence NS. A helical membrane pass occupies residues 56–78; that stretch reads FLSGFISTVTSFVLASCLRMQVN. Residues 79 to 92 lie on the Cytoplasmic side of the membrane; sequence QENRSEFTAVSTER. Residues 93 to 113 form a helical membrane-spanning segment; that stretch reads AFADFIFANLILHLVVVNFLG.

It belongs to the DAD/OST2 family. In terms of assembly, component of the oligosaccharyltransferase (OST) complex.

The protein resides in the endoplasmic reticulum membrane. It participates in protein modification; protein glycosylation. Its function is as follows. Subunit of the oligosaccharyl transferase (OST) complex that catalyzes the initial transfer of a defined glycan (Glc(3)Man(9)GlcNAc(2) in eukaryotes) from the lipid carrier dolichol-pyrophosphate to an asparagine residue within an Asn-X-Ser/Thr consensus motif in nascent polypeptide chains, the first step in protein N-glycosylation. N-glycosylation occurs cotranslationally and the complex associates with the Sec61 complex at the channel-forming translocon complex that mediates protein translocation across the endoplasmic reticulum (ER). All subunits are required for a maximal enzyme activity. Possesses cell death-inhibiting activity. Suppresses some programmed cell death in C.elegans. The sequence is that of Dolichyl-diphosphooligosaccharide--protein glycosyltransferase subunit dad-1 from Caenorhabditis elegans.